The primary structure comprises 360 residues: MLYLLSELSGTLTPLNVFRYITFRTGGALFTAGFFVFWFGPWIISLLRLRQGKGQPIREDGPASHLTKRGTPTMGGLMILAGAVVSILLWTNPHNHYVWVTLAVTLGFGAIGFYDDYLKVTKQSHKGFSGRFRLLLEFAIAGAACLMISLYSPAGLQNQLAFPVLKDTLLNLGWFWVPFAAFVIVGAGNAVNITDGLDGLAIVPVMIACATFGIIAYLVGNVIYAGYLQVNYVRDTGELAVVCGAVIGAGLGFLWFNAPPAQIFMGDTGSLALGGLLGSIAVAAKHEIVLAIVGGLFVLEIMSVIIQVVSFKLTGKRVFRMAPIHHHFEQKGWKEPQVVIRFWIIAVILALVGLATLKLR.

The next 10 membrane-spanning stretches (helical) occupy residues 27 to 47 (GALF…ISLL), 70 to 90 (GTPT…ILLW), 98 to 118 (VWVT…DDYL), 134 to 154 (LLLE…YSPA), 168 to 188 (TLLN…VGAG), 199 to 219 (GLAI…AYLV), 239 to 259 (LAVV…FNAP), 263 to 283 (IFMG…IAVA), 288 to 308 (IVLA…IIQV), and 337 to 357 (QVVI…LATL).

This sequence belongs to the glycosyltransferase 4 family. MraY subfamily. Mg(2+) is required as a cofactor.

It is found in the cell inner membrane. It catalyses the reaction UDP-N-acetyl-alpha-D-muramoyl-L-alanyl-gamma-D-glutamyl-meso-2,6-diaminopimeloyl-D-alanyl-D-alanine + di-trans,octa-cis-undecaprenyl phosphate = di-trans,octa-cis-undecaprenyl diphospho-N-acetyl-alpha-D-muramoyl-L-alanyl-D-glutamyl-meso-2,6-diaminopimeloyl-D-alanyl-D-alanine + UMP. Its pathway is cell wall biogenesis; peptidoglycan biosynthesis. Functionally, catalyzes the initial step of the lipid cycle reactions in the biosynthesis of the cell wall peptidoglycan: transfers peptidoglycan precursor phospho-MurNAc-pentapeptide from UDP-MurNAc-pentapeptide onto the lipid carrier undecaprenyl phosphate, yielding undecaprenyl-pyrophosphoryl-MurNAc-pentapeptide, known as lipid I. This chain is Phospho-N-acetylmuramoyl-pentapeptide-transferase, found in Methylorubrum extorquens (strain CM4 / NCIMB 13688) (Methylobacterium extorquens).